The primary structure comprises 239 residues: Ribosomal RNA large subunit methyltransferase E (239 aa).

Residues 1 to 20 are disordered; that stretch reads MTKAPIAGNRTGRKLGQRVK. Basic residues predominate over residues 11–20; that stretch reads TGRKLGQRVK. Gly-81, Trp-83, Asp-104, Asp-120, and Asp-144 together coordinate S-adenosyl-L-methionine. The active-site Proton acceptor is Lys-184.

It belongs to the class I-like SAM-binding methyltransferase superfamily. RNA methyltransferase RlmE family.

The protein localises to the cytoplasm. The catalysed reaction is uridine(2552) in 23S rRNA + S-adenosyl-L-methionine = 2'-O-methyluridine(2552) in 23S rRNA + S-adenosyl-L-homocysteine + H(+). Specifically methylates the uridine in position 2552 of 23S rRNA at the 2'-O position of the ribose in the fully assembled 50S ribosomal subunit. This Rhizobium johnstonii (strain DSM 114642 / LMG 32736 / 3841) (Rhizobium leguminosarum bv. viciae) protein is Ribosomal RNA large subunit methyltransferase E.